The primary structure comprises 847 residues: Pollen-specific leucine-rich repeat extensin-like protein 2 (847 aa).

The signal sequence occupies residues 1–20; that stretch reads MERPFGCFFILLLISYTVVA. LRR repeat units lie at residues 45–71, 106–130, 131–153, 155–178, 179–202, 204–224, 226–248, and 249–273; these read INKV…AWKK, LTVV…LGLM, TDLA…SLSK, ALMY…SLSW, PSLK…IFDK, LDAI…TIGK, KASV…IGNM, and KNLN…GLLN. Asn260 and Asn274 each carry an N-linked (GlcNAc...) asparagine glycan. LRR repeat units lie at residues 296 to 319 and 321 to 343; these read LASV…KFCK and PNLD…CVPG. The tract at residues 381–847 is disordered; that stretch reads KDKCSGGSNG…SPPPPMFQGY (467 aa). The segment covering 438-484 has biased composition (basic and acidic residues); it reads PKHESPKPEEPENKHELPKQKESPKPQPSKPEDSPKPEQPKPEESPK. Composition is skewed to pro residues over residues 485 to 499 and 533 to 642; these read PEQP…PVSP and VPPP…PPPT. Residues 522–847 are contains the Ser-Pro(4) repeats; that stretch reads SPPPPKVEDT…SPPPPMFQGY (326 aa). Polar residues-rich tracts occupy residues 667 to 682, 688 to 720, and 726 to 752; these read QVPT…QILS, TPVQ…SPVQ, and QAPT…SQAP. Composition is skewed to low complexity over residues 768–783 and 797–811; these read PVQS…SSPE and NPSS…TDTS. Residues 838–847 show a composition bias toward pro residues; it reads SPPPPMFQGY.

In terms of processing, hydroxylated on proline residues in the S-P-P-P-P repeat. Post-translationally, O-glycosylated on hydroxyprolines. Expressed in flowers, stamen, pollen, and pollinated carpels (at protein level).

It localises to the secreted. Its subcellular location is the cell wall. In terms of biological role, modulates cell morphogenesis by regulating cell wall formation and assembly, and/or growth polarization. The sequence is that of Pollen-specific leucine-rich repeat extensin-like protein 2 (PEX2) from Arabidopsis thaliana (Mouse-ear cress).